The primary structure comprises 170 residues: Flavin reductase (NADPH) (170 aa).

The protein belongs to the non-flavoprotein flavin reductase family.

It carries out the reaction reduced riboflavin + NADP(+) = riboflavin + NADPH + 2 H(+). Its function is as follows. Catalyzes the NADH-dependent reduction of FAD to provide FADH2 for the halogenase RebH. The sequence is that of Flavin reductase (NADPH) (rbmH) from Lentzea aerocolonigenes (Lechevalieria aerocolonigenes).